A 361-amino-acid chain; its full sequence is Cytosolic Fe-S cluster assembly factor CFD1 (361 aa).

37–44 is a binding site for ATP; it reads GKGGVGKS. The [4Fe-4S] cluster site is built by cysteine 218 and cysteine 221. Residues 293 to 314 form a disordered region; that stretch reads HSQSAAAQLPNSGDTESLTPAG.

Belongs to the Mrp/NBP35 ATP-binding proteins family. NUBP2/CFD1 subfamily. Heterotetramer of 2 NBP35 and 2 CFD1 chains. The cofactor is [4Fe-4S] cluster.

The protein localises to the cytoplasm. In terms of biological role, component of the cytosolic iron-sulfur (Fe/S) protein assembly (CIA) machinery. Required for maturation of extramitochondrial Fe-S proteins. The NBP35-CFD1 heterotetramer forms a Fe-S scaffold complex, mediating the de novo assembly of an Fe-S cluster and its transfer to target apoproteins. The protein is Cytosolic Fe-S cluster assembly factor CFD1 of Mycosarcoma maydis (Corn smut fungus).